The following is a 277-amino-acid chain: Large ribosomal subunit protein uL2 (277 aa).

The segment at 222–277 is disordered; that stretch reads GVAMNPVDHPHGGGEGRTSGGRHPVSPWGKPTKGKRTRSNKATDKFIMRTRHQRKK.

Belongs to the universal ribosomal protein uL2 family. Part of the 50S ribosomal subunit. Forms a bridge to the 30S subunit in the 70S ribosome.

In terms of biological role, one of the primary rRNA binding proteins. Required for association of the 30S and 50S subunits to form the 70S ribosome, for tRNA binding and peptide bond formation. It has been suggested to have peptidyltransferase activity; this is somewhat controversial. Makes several contacts with the 16S rRNA in the 70S ribosome. The chain is Large ribosomal subunit protein uL2 from Bartonella tribocorum (strain CIP 105476 / IBS 506).